Here is a 189-residue protein sequence, read N- to C-terminus: Cytochrome bo(3) ubiquinol oxidase subunit 3 (189 aa).

The Cytoplasmic segment spans residues 1–10 (MIKETMRNNK). The chain crosses the membrane as a helical span at residues 11–31 (LFGLWIYLMSDCIIFAVLFAV). Topologically, residues 32–52 (YAIISSNFSTNLINHKIFNLS) are extracellular. A helical membrane pass occupies residues 53-73 (YVFLETLILLLSSLSSGMLTI). At 74 to 81 (QKNKNNIK) the chain is on the cytoplasmic side. Residues 82 to 102 (IIYFYLLLTFFLGLSFLLMEV) form a helical membrane-spanning segment. Over 103 to 122 (NEFYKLILENCSPSQHAFFS) the chain is Extracellular. A helical transmembrane segment spans residues 123-143 (IFFTIVGVHGIHVFFGLIFIL). The Cytoplasmic segment spans residues 144-161 (SILYQLFYLGITNTIRIR). A helical membrane pass occupies residues 162–182 (ILCFSLFWHFLDIIWICVFTF). The Extracellular segment spans residues 183-189 (VYLNGVI).

This sequence belongs to the cytochrome c oxidase subunit 3 family. As to quaternary structure, heterooctamer of two A chains, two B chains, two C chains and two D chains.

Its subcellular location is the cell membrane. Functionally, cytochrome bo(3) ubiquinol terminal oxidase is the component of the aerobic respiratory chain of E.coli that predominates when cells are grown at high aeration. Has proton pump activity across the membrane in addition to electron transfer, pumping 2 protons/electron. The protein is Cytochrome bo(3) ubiquinol oxidase subunit 3 (cyoC) of Buchnera aphidicola subsp. Schizaphis graminum (strain Sg).